The sequence spans 366 residues: MTILNRFCRTILLTNLELTNCGIRKNNSYKCRSFTHTINIDTNHIVPIHTQSNITLELFQPKISVVGVGGGGGNAVNHMISQSLEGVEFFVCNTDSQDLIKSNSINKIQLGPQLTKGHGAGANPEKGRLAAEESKNKIIQTFKDTDLLFLAAGMGGGTGTGSSPIIAKTIKEFKKETIIVGVVTVPFNFEGKRKEIIAKKGLEELSKYVDTLVVISNQNLLDASKSDIQLEQAFLMVDEILHTGIRSIANIINVPGMINLDYSDVVNILKNRKGLSRIGFGEASGEDRAYKAVHKAIKNPLIEIDDQKFTGLLVNISGGNDITLNEISKTINYLQQNADPDVQVFVGHTVDNSLLGKIRISCLFVH.

GTP-binding positions include 70-74, 157-159, Glu190, and Asp238; these read GGGGN and GTG.

Belongs to the FtsZ family.

It localises to the mitochondrion. Functionally, probably involved in mitochondrion division process. Binds to and hydrolyzes GTP. The chain is Mitochondrial division protein fszB (fszB) from Dictyostelium discoideum (Social amoeba).